The chain runs to 549 residues: Membrane protein insertase YidC (549 aa).

The chain crosses the membrane as a helical span at residues 9–29 (LRLILAIALSFLFIALYSYFF). The segment covering 37–51 (TETTKQETTNNHTAT) has biased composition (low complexity). The disordered stretch occupies residues 37–56 (TETTKQETTNNHTATSPTAS). 5 helical membrane-spanning segments follow: residues 328–348 (VIEYGLITFFAKGVFVLLDYL), 351–371 (FVGNWGWAIILLTIIVRIILY), 417–437 (GANPLGGCLPLILQIPVFFAI), 452–472 (WVLWIHDLSIMDPYFILPLLM), and 498–518 (LLPLLFTIFLITFPAGLVLYW).

This sequence belongs to the OXA1/ALB3/YidC family. Type 1 subfamily. In terms of assembly, interacts with the Sec translocase complex via SecD. Specifically interacts with transmembrane segments of nascent integral membrane proteins during membrane integration.

Its subcellular location is the cell inner membrane. Functionally, required for the insertion and/or proper folding and/or complex formation of integral membrane proteins into the membrane. Involved in integration of membrane proteins that insert both dependently and independently of the Sec translocase complex, as well as at least some lipoproteins. Aids folding of multispanning membrane proteins. The sequence is that of Membrane protein insertase YidC from Helicobacter pylori (strain J99 / ATCC 700824) (Campylobacter pylori J99).